An 872-amino-acid polypeptide reads, in one-letter code: Tegument protein UL47 homolog (872 aa).

A disordered region spans residues methionine 1–aspartate 206. Residues isoleucine 13–threonine 33 carry the Nuclear localization signal motif. Residues glycine 31–arginine 41 are compositionally biased toward polar residues. Composition is skewed to low complexity over residues glutamate 66–serine 80 and aspartate 91–arginine 101. 2 stretches are compositionally biased toward acidic residues: residues proline 110–glutamine 134 and alanine 177–serine 204.

The protein belongs to the alphaherpesvirinae HHV-1 UL47 family. In terms of assembly, interacts with US3 kinase. Interacts with UL31 and UL34; these interactions seem important for efficient virion nuclear egress. Interacts with UL41/VHS. In terms of processing, phosphorylated by US3. This phosphorylation is required for proper nuclear localization. O-glycosylated.

The protein localises to the virion tegument. Its subcellular location is the host nucleus. It localises to the host cytoplasm. Its function is as follows. Tegument protein that can bind to various RNA transcripts. Plays a role in the attenuation of selective viral and cellular mRNA degradation by modulating the activity of host shutoff RNase UL41/VHS. Also plays a role in the primary envelopment of virions in the perinuclear space, probably by interacting with two nuclear egress proteins UL31 and UL34. The chain is Tegument protein UL47 homolog (13) from Equus caballus (Horse).